The primary structure comprises 228 residues: E3 ubiquitin-protein ligase RNF114 (228 aa).

The RING-type zinc-finger motif lies at 29 to 68; sequence CPVCLEVYEKPVQVPCGHVFCSACLQECLKPKKPVCGVCR. Zn(2+) is bound by residues Cys91 and Cys94. The C2HC RNF-type zinc finger occupies 91–110; it reads CHGCRKKFFLSKIRSHVATC. Lys102 carries the post-translational modification N6-acetyllysine. Zn(2+) is bound by residues His106 and Cys110. Lys112 bears the N6-acetyllysine mark.

Interacts with XAF1, the interaction increases XAF1 stability and proapoptotic effects, and may regulate IFN signaling. Post-translationally, autoubiquitinated. Polyubiquitinated in the presence of E2 enzymes UBE2D1, UBE2D2 and UBE2D3, but only monoubiquitinated in the presence of UBE2E1.

Its subcellular location is the cytoplasm. It is found in the nucleus. The enzyme catalyses S-ubiquitinyl-[E2 ubiquitin-conjugating enzyme]-L-cysteine + [acceptor protein]-L-lysine = [E2 ubiquitin-conjugating enzyme]-L-cysteine + N(6)-ubiquitinyl-[acceptor protein]-L-lysine.. It functions in the pathway protein modification; protein ubiquitination. Functionally, E3 ubiquitin-protein ligase that promotes the ubiquitination of various substrates. In turn, participates in the regulation of many biological processes including cell cycle, apoptosis, osteoclastogenesis as well as innate or adaptive immunity. Acts as negative regulator of NF-kappa-B-dependent transcription by promoting the ubiquitination and stabilization of the NF-kappa-B inhibitor TNFAIP3. May promote the ubiquitination of TRAF6 as well. Also acts as a negative regulator of T-cell activation. Inhibits cellular dsRNA responses and interferon production by targeting MAVS component for proteasomal degradation. Ubiquitinates the CDK inhibitor CDKN1A leading to its degradationand probably also CDKN1B and CDKN1C. This activity stimulates cell cycle G1-to-S phase transition and suppresses cellular senescence. May play a role in spermatogenesis. The polypeptide is E3 ubiquitin-protein ligase RNF114 (RNF114) (Pan troglodytes (Chimpanzee)).